The following is a 20-amino-acid chain: L-amino-acid oxidase L1 (20 aa).

Belongs to the flavin monoamine oxidase family. FIG1 subfamily. In terms of assembly, monomer. This is in contrast with most of its orthologs, that are non-covalently linked homodimers. FAD is required as a cofactor. Post-translationally, N-glycosylated. Expressed by the venom gland.

The protein resides in the secreted. It carries out the reaction an L-alpha-amino acid + O2 + H2O = a 2-oxocarboxylate + H2O2 + NH4(+). The enzyme catalyses L-leucine + O2 + H2O = 4-methyl-2-oxopentanoate + H2O2 + NH4(+). It catalyses the reaction L-phenylalanine + O2 + H2O = 3-phenylpyruvate + H2O2 + NH4(+). The catalysed reaction is L-tryptophan + O2 + H2O = indole-3-pyruvate + H2O2 + NH4(+). It carries out the reaction L-methionine + O2 + H2O = 4-methylsulfanyl-2-oxobutanoate + H2O2 + NH4(+). The enzyme catalyses L-isoleucine + O2 + H2O = (S)-3-methyl-2-oxopentanoate + H2O2 + NH4(+). It catalyses the reaction L-tyrosine + O2 + H2O = 3-(4-hydroxyphenyl)pyruvate + H2O2 + NH4(+). In terms of biological role, catalyzes an oxidative deamination of predominantly hydrophobic and aromatic L-amino acids, thus producing hydrogen peroxide that may contribute to the diverse toxic effects of this enzyme. Is active on L-Met, L-Ile, L-Leu, L-Phe, L-Trp, and L-Tyr. Exhibits diverse biological activities, such as hemorrhage, hemolysis, edema, apoptosis of vascular endothelial cells or tumor cell lines, antibacterial and antiparasitic activities, as well as regulation of platelet aggregation. Its effect on platelets is controversial, since it either induces aggregation or inhibits agonist-induced aggregation. These different effects are probably due to different experimental conditions. In Daboia russelii (Russel's viper), this protein is L-amino-acid oxidase L1.